We begin with the raw amino-acid sequence, 389 residues long: MKSSVLLSLCTAALVAGAAHPLEPQVVLKDGQSTFTEPDEYLIELSPGETRWVTEEGKWELRRQNINFFDITHHEDLGTINANRLIEKSVKFPSKPAFNKTVVPLLKKLKKDNMRKHLETFTSFHTRYYKSQYGAQSSAWLLEQVSKTLSDAGAVNASVKAFPHPWGQSSIIATLPGKSNKTVVIGAHQDSINLFLPSILAAPGADDDGSGTVTILEALRVLLKSEGILDGSAPNTVEFHWYSAEEGGLLGSQAIFQSYEKEGRDVKAMLQQDMTGYVQKTLDAGEPESVGVITDFVDPGLTEFIKQIITVYCDIPFILTKCGYACSDHASASKAGYPSAFVIESDFKYSDSKIHTTEDKIEYLSFDHMLQHAKLTLALAYELAFAEFK.

The first 18 residues, 1–18 (MKSSVLLSLCTAALVAGA), serve as a signal peptide directing secretion. Positions 19-89 (AHPLEPQVVL…INANRLIEKS (71 aa)) are excised as a propeptide. N-linked (GlcNAc...) asparagine glycosylation is found at asparagine 99, asparagine 156, and asparagine 180. The Zn(2+) site is built by histidine 188, aspartate 207, glutamate 246, and aspartate 273. An intrachain disulfide couples cysteine 322 to cysteine 326. Histidine 355 lines the Zn(2+) pocket.

The protein belongs to the peptidase M28 family. M28E subfamily. Monomer. The cofactor is Zn(2+).

The protein resides in the secreted. In terms of biological role, extracellular aminopeptidase that allows assimilation of proteinaceous substrates. This chain is Leucine aminopeptidase 1 (LAP1), found in Phaeosphaeria nodorum (strain SN15 / ATCC MYA-4574 / FGSC 10173) (Glume blotch fungus).